A 397-amino-acid chain; its full sequence is Lysophospholipid transporter LplT (397 aa).

Residues 1-17 (MSESVHTNTSLWSKGMK) lie on the Periplasmic side of the membrane. The chain crosses the membrane as a helical span at residues 18 to 38 (AVIVAQFLSAFGDNALLFATL). Residues 39–52 (ALLKAQFYPEWSQP) are Cytoplasmic-facing. The chain crosses the membrane as a helical span at residues 53–73 (ILQMVFVGAYILFAPFVGQVA). At 74 to 90 (DSFAKGRVMMFANGLKL) the chain is on the periplasmic side. The chain crosses the membrane as a helical span at residues 91–111 (LGAASICFGINPFLGYTLVGV). Topologically, residues 112-144 (GAAAYSPAKYGILGELTTGSKLVKANGLMEAST) are cytoplasmic. The chain crosses the membrane as a helical span at residues 145–165 (IAAILLGSVAGGVLADWHVLV). Ala-166 is a topological domain (periplasmic). Residues 167 to 187 (LAACALAYGGAVVANIYIPKL) form a helical membrane-spanning segment. Residues 188–226 (AAARPGQSWNLINMTRSFLNACTSLWRNGETRFSLVGTS) lie on the Cytoplasmic side of the membrane. Residues 227 to 247 (LFWGAGVTLRFLLVLWVPVAL) traverse the membrane as a helical segment. Residues 248-256 (GITDNATPT) lie on the Periplasmic side of the membrane. A helical transmembrane segment spans residues 257 to 277 (YLNAMVAIGIVVGAGAAAKLV). Residues 278 to 280 (TLE) lie on the Cytoplasmic side of the membrane. The chain crosses the membrane as a helical span at residues 281–301 (TVSRCMPAGILIGVVVLIFSL). Residues 302-304 (QHE) lie on the Periplasmic side of the membrane. The helical transmembrane segment at 305–325 (LLPAYALLMLIGVLGGFFVVP) threads the bilayer. The Cytoplasmic portion of the chain corresponds to 326-343 (LNALLQERGKKSVGAGNA). Residues 344 to 364 (IAVQNLGENSAMLLMLGIYSL) form a helical membrane-spanning segment. The Periplasmic portion of the chain corresponds to 365-366 (AV). Residues 367–387 (MVGIPVVPIGIGFGTLFALAI) form a helical membrane-spanning segment. Residues 388–397 (TALWIWQRRH) are Cytoplasmic-facing.

The protein belongs to the major facilitator superfamily. LplT (TC 2.A.1.42) family.

It localises to the cell inner membrane. In terms of biological role, catalyzes the facilitated diffusion of 2-acyl-glycero-3-phosphoethanolamine (2-acyl-GPE) into the cell. The polypeptide is Lysophospholipid transporter LplT (Escherichia coli O9:H4 (strain HS)).